The sequence spans 84 residues: CLAVATA3/ESR (CLE)-related protein 13 (84 aa).

An N-terminal signal peptide occupies residues 1 to 29 (MGRYTTDQVQVYVLVIVLCTFFSTLQARS). The segment at 57–84 (KQVRDISGDRLSPAGPDPQHNGRSPPRK) is disordered. Hydroxyproline occurs at positions 69 and 72. The O-linked (Ara...) hydroxyproline glycan is linked to P72.

This sequence belongs to the CLV3/ESR signal peptide family. Post-translationally, the O-glycosylation (arabinosylation) of the hydroxyproline Pro-72 enhances binding affinity of the CLE13p peptide for its receptor. Expressed in young nodules throughout the central tissue. Expressed in the apical region of elongated nodules, corresponding to the meristematic and early infection zones.

It is found in the secreted. The protein localises to the extracellular space. In terms of biological role, signaling peptide involved in the regulation of nodulation. Moves from root to shoot to function with the receptor kinase SUNN, in a signaling pathway that plays roles during cellular differentiation, both at the onset of nodulation, and later during nodule meristem development and subsequent homeostasis. Interacts with SUNN signaling to control nodule numbers. SUNN is involved in the autoregulation of nodulation (AON), a long distance systemic signaling from root to shoot and back again, which allows legumes to limit the number of root nodules formed based on available nitrogen and previous rhizobial colonization. This Medicago truncatula (Barrel medic) protein is CLAVATA3/ESR (CLE)-related protein 13.